We begin with the raw amino-acid sequence, 255 residues long: Very-long-chain (3R)-3-hydroxyacyl-CoA dehydratase 2 (255 aa).

The Cytoplasmic segment spans residues 3-42 (AAAAATAAAKGNGGGGGRAGAGDASGTRKKKGPGPLATAY). Residues 11 to 34 (AKGNGGGGGRAGAGDASGTRKKKG) form a disordered region. Residues 13–22 (GNGGGGGRAG) show a composition bias toward gly residues. The helical transmembrane segment at 43–61 (LVIYNVVMTAGWLVIAVGL) threads the bilayer. At 62–80 (VRAYLAKGSYHSLYYSIEK) the chain is on the lumenal side. The helical transmembrane segment at 81–98 (PLKFFQTGALLEILHCAI) threads the bilayer. The Cytoplasmic portion of the chain corresponds to 99 to 108 (GIVPSSVVLT). The helical transmembrane segment at 109–126 (SFQVMSRVFLIWAVTHSV) threads the bilayer. The Lumenal segment spans residues 127-131 (KEVQS). The chain crosses the membrane as a helical span at residues 132-147 (EDSVLLFVIAWTITEI). At 148-170 (IRYSFYTFSLLNHLPYLIKWARY) the chain is on the cytoplasmic side. Residues 171 to 188 (TLFIVLYPMGVSGELLTI) form a helical membrane-spanning segment. Catalysis depends on residues Y177 and E184. Residues 189–218 (YAALPFVRQAGLYSISLPNKYNFSFDYYAF) lie on the Lumenal side of the membrane. Positions 199–215 (GLYSISLPNKYNFSFDY) are may be involved in interaction with TECR. N210 carries an N-linked (GlcNAc...) asparagine glycan. Residues 219–236 (LILIMISYIPIFPQLYFH) form a helical membrane-spanning segment. At 237–255 (MIHQRRKILSHTEEHKKFE) the chain is on the cytoplasmic side.

The protein belongs to the very long-chain fatty acids dehydratase HACD family. In terms of assembly, may interact with enzymes of the ELO family (including ELOVL1); with those enzymes that mediate condensation, the first of the four steps of the reaction cycle responsible for fatty acids elongation, may be part of a larger fatty acids elongase complex. Interacts with BCAP31. Interacts (via the third lumenal loop) with TECR.

Its subcellular location is the endoplasmic reticulum membrane. It carries out the reaction a very-long-chain (3R)-3-hydroxyacyl-CoA = a very-long-chain (2E)-enoyl-CoA + H2O. It catalyses the reaction (3R)-hydroxyhexadecanoyl-CoA = (2E)-hexadecenoyl-CoA + H2O. The catalysed reaction is (3R)-hydroxyoctadecanoyl-CoA = (2E)-octadecenoyl-CoA + H2O. The enzyme catalyses (3R)-hydroxyeicosanoyl-CoA = (2E)-eicosenoyl-CoA + H2O. It carries out the reaction (3R)-hydroxydocosanoyl-CoA = (2E)-docosenoyl-CoA + H2O. It catalyses the reaction (3R)-hydroxytetracosanoyl-CoA = (2E)-tetracosenoyl-CoA + H2O. The catalysed reaction is (3R)-hydroxyhexacosanoyl-CoA = (2E)-hexacosenoyl-CoA + H2O. The protein operates within lipid metabolism; fatty acid biosynthesis. In terms of biological role, catalyzes the third of the very long-chain fatty acids (VLCFA) elongation four-step cycle (condensation, reduction, dehydration, and reduction). This endoplasmic reticulum-elongation process is characterized by the addition of two carbons to the lipid chain through each cycle. This enzyme catalyzes the dehydration of the 3-hydroxyacyl-CoA intermediate into trans-2,3-enoyl-CoA, within each cycle of elongation. Therefore, it participates in the production of various VLCFAs involved in multiple biological processes as precursors of membrane lipids and lipid mediators. This is Very-long-chain (3R)-3-hydroxyacyl-CoA dehydratase 2 from Pongo abelii (Sumatran orangutan).